The sequence spans 257 residues: tRNA pseudouridine synthase A (257 aa).

Asp53 functions as the Nucleophile in the catalytic mechanism. Tyr111 contacts substrate.

It belongs to the tRNA pseudouridine synthase TruA family. Homodimer.

The catalysed reaction is uridine(38/39/40) in tRNA = pseudouridine(38/39/40) in tRNA. Its function is as follows. Formation of pseudouridine at positions 38, 39 and 40 in the anticodon stem and loop of transfer RNAs. This chain is tRNA pseudouridine synthase A, found in Xanthomonas campestris pv. campestris (strain 8004).